We begin with the raw amino-acid sequence, 274 residues long: Cytochrome b-c1 complex subunit Rieske, mitochondrial (274 aa).

The Mitochondrial matrix segment spans residues 79 to 103 (SHTDVKVPDFCDYRRPEVLDSTKSS). The chain crosses the membrane as a helical span at residues 104 to 140 (RESSEARKSFSYMVTAVTTVGVAYAAKNAVTQFVSSM). The Mitochondrial intermembrane segment spans residues 141 to 274 (SASADVLAMA…FTSDDMVVVG (134 aa)). Positions 187-272 (EAAVELSQLR…YEFTSDDMVV (86 aa)) constitute a Rieske domain. Cys217, His219, Cys236, His239, and Ser241 together coordinate [2Fe-2S] cluster. Cys222 and Cys238 are oxidised to a cystine.

Belongs to the Rieske iron-sulfur protein family. Component of the ubiquinol-cytochrome c oxidoreductase (cytochrome b-c1 complex, complex III, CIII), a multisubunit enzyme composed of 11 subunits. The complex is composed of 3 respiratory subunits cytochrome b, cytochrome c1 and Rieske protein UQCRFS1, 2 core protein subunits UQCRC1/QCR1 and UQCRC2/QCR2, and 6 low-molecular weight protein subunits UQCRH/QCR6, UQCRB/QCR7, UQCRQ/QCR8, UQCR10/QCR9, UQCR11/QCR10 and subunit 9, the cleavage product of Rieske protein UQCRFS1. The complex exists as an obligatory dimer and forms supercomplexes (SCs) in the inner mitochondrial membrane with NADH-ubiquinone oxidoreductase (complex I, CI) and cytochrome c oxidase (complex IV, CIV), resulting in different assemblies (supercomplex SCI(1)III(2)IV(1) and megacomplex MCI(2)III(2)IV(2)). Incorporation of the Rieske protein UQCRFS1 is the penultimate step in complex III assembly. Interacts with TTC19, which is involved in the clearance of UQCRFS1 fragments. As to quaternary structure, component of the ubiquinol-cytochrome c oxidoreductase (cytochrome b-c1 complex, complex III, CIII). Subunit 9 corresponds to the mitochondrial targeting sequence (MTS) of Rieske protein UQCRFS1. It is retained after processing and incorporated inside complex III, where it remains bound to the complex and localizes between the 2 core subunits UQCRC1/QCR1 and UQCRC2/QCR2. Requires [2Fe-2S] cluster as cofactor. Post-translationally, proteolytic processing is necessary for the correct insertion of UQCRFS1 in the complex III dimer. Several fragments are generated during UQCRFS1 insertion, most probably due to the endogenous matrix-processing peptidase (MPP) activity of the 2 core protein subunits UQCRC1/QCR1 and UQCRC2/QCR2, which are homologous to the 2 mitochondrial-processing peptidase (MPP) subunits beta-MPP and alpha-MPP respectively. The action of the protease is also necessary for the clearance of the UQCRFS1 fragments.

Its subcellular location is the mitochondrion inner membrane. The enzyme catalyses a quinol + 2 Fe(III)-[cytochrome c](out) = a quinone + 2 Fe(II)-[cytochrome c](out) + 2 H(+)(out). Functionally, component of the ubiquinol-cytochrome c oxidoreductase, a multisubunit transmembrane complex that is part of the mitochondrial electron transport chain which drives oxidative phosphorylation. The respiratory chain contains 3 multisubunit complexes succinate dehydrogenase (complex II, CII), ubiquinol-cytochrome c oxidoreductase (cytochrome b-c1 complex, complex III, CIII) and cytochrome c oxidase (complex IV, CIV), that cooperate to transfer electrons derived from NADH and succinate to molecular oxygen, creating an electrochemical gradient over the inner membrane that drives transmembrane transport and the ATP synthase. The cytochrome b-c1 complex catalyzes electron transfer from ubiquinol to cytochrome c, linking this redox reaction to translocation of protons across the mitochondrial inner membrane, with protons being carried across the membrane as hydrogens on the quinol. In the process called Q cycle, 2 protons are consumed from the matrix, 4 protons are released into the intermembrane space and 2 electrons are passed to cytochrome c. The Rieske protein is a catalytic core subunit containing a [2Fe-2S] iron-sulfur cluster. It cycles between 2 conformational states during catalysis to transfer electrons from the quinol bound in the Q(0) site in cytochrome b to cytochrome c1. Incorporation of UQCRFS1 is the penultimate step in complex III assembly. In terms of biological role, component of the ubiquinol-cytochrome c oxidoreductase (cytochrome b-c1 complex, complex III, CIII). UQCRFS1 undergoes proteolytic processing once it is incorporated in the complex III dimer. One of the fragments, called subunit 9, corresponds to its mitochondrial targeting sequence (MTS). The proteolytic processing is necessary for the correct insertion of UQCRFS1 in the complex III dimer, but the persistence of UQCRFS1-derived fragments may prevent newly imported UQCRFS1 to be processed and assembled into complex III and is detrimental for the complex III structure and function. This chain is Cytochrome b-c1 complex subunit Rieske, mitochondrial (UQCRFS1), found in Colobus polykomos (Western black-and-white colobus monkey).